The following is a 90-amino-acid chain: Acylphosphatase (90 aa).

Residues 3-90 (QKLFIVTGHV…EQFEHFEIRR (88 aa)) enclose the Acylphosphatase-like domain. Active-site residues include Arg-18 and Asn-36.

Belongs to the acylphosphatase family.

It catalyses the reaction an acyl phosphate + H2O = a carboxylate + phosphate + H(+). The polypeptide is Acylphosphatase (acyP) (Actinobacillus pleuropneumoniae serotype 5b (strain L20)).